Reading from the N-terminus, the 461-residue chain is Porin AaxA (461 aa).

The signal sequence occupies residues methionine 1–alanine 22.

The protein belongs to the OprB family.

It is found in the cell outer membrane. Its function is as follows. Facilitates L-arginine uptake, as part of the AaxABC system. The arginine uptake by the bacterium in the macrophage may be a virulence factor against the host innate immune response. The chain is Porin AaxA (aaxA) from Chlamydia trachomatis serovar L2 (strain ATCC VR-902B / DSM 19102 / 434/Bu).